We begin with the raw amino-acid sequence, 1977 residues long: Echinoderm microtubule-associated protein-like 5 (1977 aa).

WD repeat units follow at residues 59 to 100, 104 to 145, 148 to 187, 195 to 233, 235 to 273, 280 to 321, 323 to 362, 364 to 403, 406 to 445, 449 to 488, and 561 to 601; these read GHSD…TVSV, VHTH…MLSM, GHTDRIFDISWDLYQPNKLVSCGVKHIKFWSLCGNALTPK, GDLQTILCLACARDELTYSGALNGDIYVWKGINLIRTIQ, AHTAGIFSMNACEEGFATGGRDGCIRLWDLTFKPITVID, GYKG…LIMQ, HCEGELWALAVHPTKPLAVTGSDDRSVRIWSLVDHALIAR, NMDEPIRCAAVNADGVHLALGMKDGSLTVLRVRDMTEVVH, DRKEAIHELKYSPDGTYLAVGCNDSSVDIYGVAQRYKKVG, GSLSFITHLDWSSDSKYLQTNDGSGKRLLYKMPGGKEVTS, and GHSA…KLKD. Residues 609–629 form a disordered region; sequence ESLTESNSDESDSDLSDVPEL. Positions 615-629 are enriched in acidic residues; it reads NSDESDSDLSDVPEL. WD repeat units lie at residues 725 to 766, 770 to 811, 814 to 853, 861 to 900, 901 to 940, 996 to 1035, 1038 to 1077, 1080 to 1120, and 1236 to 1276; these read GHDD…PLSI, YHQY…KLSV, GSKDKIFVVKMNPYVPDKLITAGIKHMKFWRRAGGGLIGR, GKNDTMMCAVYGWTEEMAFSGTSTGDVCIWRDVFLVKTVK, AHDGPVFSMHALEKGFVTGGKDGVVALWDDSFERCLKTYA, HMEGEVWGLATHPYLPICATVSDDKTLRIWDLSPSHCMLA, KLKKGGRCCCFSPDGKALAVGLNDGSFLMANADTLEDLVS, HRKD…RVGV, and AHST…HREK. Disordered regions lie at residues 1274–1299 and 1323–1363; these read REKKNCDSEESDTDSEEDGGYDSDVT and PHLQ…NVGK. Positions 1281-1294 are enriched in acidic residues; that stretch reads SEESDTDSEEDGGY. The segment covering 1326-1337 has biased composition (basic and acidic residues); the sequence is QQKEPSVDERQG. WD repeat units lie at residues 1420–1471, 1475–1516, 1519–1558, 1568–1606, 1608–1654, 1699–1739, 1741–1782, 1783–1822, 1895–1934, and 1940–1977; these read EHND…TLSI, SHSK…KIAS, GHNQRIFVAEFRPDSDTQFVSVGIKHVKFWTLAGRALLSK, ARMQTMLAVAFGANNLTFTGTISGDVCVWKDHILCRVVA, AHNG…RAFR, GHVD…MLNK, NLGH…GKKR, DRRCAIHDIRFSPDSRYLAVGSSENSVDFYDLTLGPTLNR, AEKADVTCACVSHSGISLVTGDDFGMVKLYDFPCPEKFAK, and GHSPHVTNIRFTSGDRHVVSAGGDDCSVFVWKCVHTPH.

The protein belongs to the WD repeat EMAP family. As to expression, highly expressed in brain, especially in hippocampus, cerebellum and olfactory bulb (at protein level).

Its subcellular location is the cytoplasm. It is found in the cytoskeleton. May modify the assembly dynamics of microtubules, such that microtubules are slightly longer, but more dynamic. The chain is Echinoderm microtubule-associated protein-like 5 (Eml5) from Rattus norvegicus (Rat).